The following is a 208-amino-acid chain: Endoplasmic reticulum vesicle protein 25 (208 aa).

A signal peptide spans M1–A15. The Lumenal segment spans residues L16–R177. The 91-residue stretch at Q28 to S118 folds into the GOLD domain. A helical membrane pass occupies residues N178–L198. Over K199 to I208 the chain is Cytoplasmic.

It belongs to the EMP24/GP25L family.

Its subcellular location is the endoplasmic reticulum membrane. The protein localises to the golgi apparatus membrane. Functionally, constituent of COPII-coated endoplasmic reticulum-derived transport vesicles. Required for efficient transport of a subset of secretory proteins to the Golgi. Facilitates retrograde transport from the Golgi to the endoplasmic reticulum. This Candida glabrata (strain ATCC 2001 / BCRC 20586 / JCM 3761 / NBRC 0622 / NRRL Y-65 / CBS 138) (Yeast) protein is Endoplasmic reticulum vesicle protein 25 (ERV25).